Consider the following 146-residue polypeptide: Transcriptional regulator MraZ (146 aa).

2 consecutive SpoVT-AbrB domains span residues 6–49 and 78–121; these read TYDH…TEEE and THEV…DQKS.

This sequence belongs to the MraZ family. In terms of assembly, forms oligomers.

It localises to the cytoplasm. It is found in the nucleoid. This is Transcriptional regulator MraZ from Mesoplasma florum (strain ATCC 33453 / NBRC 100688 / NCTC 11704 / L1) (Acholeplasma florum).